A 180-amino-acid chain; its full sequence is uncharacterized protein (180 aa).

An N-acetyltransferase domain is found at 31 to 180 (LLVRTAEWLR…HLFEKEITAE (150 aa)).

The protein belongs to the acetyltransferase family.

This is an uncharacterized protein from Bacillus subtilis (strain 168).